A 235-amino-acid chain; its full sequence is Peroxynitrite isomerase 2 (235 aa).

The GXWXGXG signature appears at 82 to 88; the sequence is GVWRGEG. 2 residues coordinate heme b: K198 and H225.

The protein belongs to the nitrobindin family. Homodimer. It depends on heme b as a cofactor.

The enzyme catalyses peroxynitrite = nitrate. It functions in the pathway nitrogen metabolism. Its function is as follows. Heme-binding protein able to scavenge peroxynitrite and to protect free L-tyrosine against peroxynitrite-mediated nitration, by acting as a peroxynitrite isomerase that converts peroxynitrite to nitrate. Therefore, this protein likely plays a role in peroxynitrite sensing and in the detoxification of reactive nitrogen and oxygen species (RNS and ROS, respectively). Is able to bind nitric oxide (NO) in vitro, but may act as a sensor of peroxynitrite levels in vivo. The sequence is that of Peroxynitrite isomerase 2 from Mycolicibacterium paratuberculosis (strain ATCC BAA-968 / K-10) (Mycobacterium paratuberculosis).